The primary structure comprises 105 residues: Urease subunit beta (105 aa).

Belongs to the urease beta subunit family. Heterotrimer of UreA (gamma), UreB (beta) and UreC (alpha) subunits. Three heterotrimers associate to form the active enzyme.

It localises to the cytoplasm. The enzyme catalyses urea + 2 H2O + H(+) = hydrogencarbonate + 2 NH4(+). Its pathway is nitrogen metabolism; urea degradation; CO(2) and NH(3) from urea (urease route): step 1/1. The chain is Urease subunit beta from Pseudomonas putida (strain ATCC 47054 / DSM 6125 / CFBP 8728 / NCIMB 11950 / KT2440).